Reading from the N-terminus, the 165-residue chain is RxLR effector protein CRE12 (165 aa).

Residues 1-23 (MRLAAFVLVAVAFAIIPDGRVSA) form the signal peptide. The RxLR-dEER signature appears at 40–59 (RLLRLNAVPQPVETGNQEER).

Belongs to the RxLR effector family.

It is found in the secreted. The protein localises to the host cell. Functionally, effector that is involved in host plant infection. Contributes to virulence during the early infection stage, by inhibiting plant defense responses induced by both PAMP-triggered immunity (PTI) and effector-triggered immunity (ETI). The polypeptide is RxLR effector protein CRE12 (Phytophthora infestans (strain T30-4) (Potato late blight agent)).